The sequence spans 504 residues: UDP-N-acetylmuramoylalanine--D-glutamate ligase (504 aa).

132-138 is a binding site for ATP; that stretch reads GTNGKTT. The tract at residues 284 to 310 is disordered; sequence AQDRDATDEPAPTRRRKSESTAPPDIG.

It belongs to the MurCDEF family.

The protein localises to the cytoplasm. The enzyme catalyses UDP-N-acetyl-alpha-D-muramoyl-L-alanine + D-glutamate + ATP = UDP-N-acetyl-alpha-D-muramoyl-L-alanyl-D-glutamate + ADP + phosphate + H(+). Its pathway is cell wall biogenesis; peptidoglycan biosynthesis. Its function is as follows. Cell wall formation. Catalyzes the addition of glutamate to the nucleotide precursor UDP-N-acetylmuramoyl-L-alanine (UMA). This Paraburkholderia phymatum (strain DSM 17167 / CIP 108236 / LMG 21445 / STM815) (Burkholderia phymatum) protein is UDP-N-acetylmuramoylalanine--D-glutamate ligase.